The chain runs to 157 residues: MKESILDVLLYLFEHYFSEDADLIRDRDSLQNGLIQAGFSPTEINKAFDWLDALAAQRPSVAQARVDGPVRVYHGPELDKLDVECRGFLLYLEQHGILDADQRELVLDRAMALDQDELDLDDLKWVVLMVLFNQPGSEAAYAWMETQMFMDEPEPLH.

Belongs to the Smg family.

In Stenotrophomonas maltophilia (strain R551-3), this protein is Protein Smg homolog.